The following is a 457-amino-acid chain: Secreted RxLR effector protein 8 (457 aa).

The N-terminal stretch at 1-19 (MRGTLATALLLVISSRVAT) is a signal peptide. The RxLR-dEER signature appears at 48-69 (RFLRGSRKQRDDLAPTAADENR). A glycan (N-linked (GlcNAc...) asparagine) is linked at Asn68. 2 disordered regions span residues 110–188 (RLSL…ALKS) and 398–457 (RQTI…RSSS). Residues 135-152 (SASTSTTSDIATSSSRTS) show a composition bias toward low complexity. 2 stretches are compositionally biased toward polar residues: residues 153 to 163 (NQRTPKTQASL) and 176 to 187 (SKNQFKKSTALK). The span at 442–457 (IKSKDHARKKRPRSSS) shows a compositional bias: basic residues.

Belongs to the RxLR effector family.

It localises to the secreted. The protein resides in the host nucleus. Functionally, secreted effector that completely suppresses the host cell death induced by cell death-inducing proteins. This Plasmopara viticola (Downy mildew of grapevine) protein is Secreted RxLR effector protein 8.